The following is a 489-amino-acid chain: 2-(3-amino-3-carboxypropyl)histidine synthase subunit 2 (489 aa).

Methionine 1 is modified (N-acetylmethionine). Serine 7 carries the phosphoserine modification. The [4Fe-4S] cluster site is built by cysteine 89, cysteine 110, and cysteine 341. The interval 398–489 is required for function; sequence PPPESELWDT…AIAYEDEGSG (92 aa). A Phosphothreonine modification is found at threonine 435. Phosphoserine occurs at positions 446 and 456. Threonine 467 carries the post-translational modification Phosphothreonine. Residue serine 488 is modified to Phosphoserine.

This sequence belongs to the DPH1/DPH2 family. DPH2 subfamily. Component of the 2-(3-amino-3-carboxypropyl)histidine synthase complex composed of DPH1, DPH2, DPH3 and a NADH-dependent reductase. Interacts with DPH1. [4Fe-4S] cluster serves as cofactor.

It participates in protein modification; peptidyl-diphthamide biosynthesis. Its function is as follows. Required for the first step of diphthamide biosynthesis, a post-translational modification of histidine which occurs in elongation factor 2. DPH1 and DPH2 transfer a 3-amino-3-carboxypropyl (ACP) group from S-adenosyl-L-methionine (SAM) to a histidine residue, the reaction is assisted by a reduction system comprising DPH3 and a NADH-dependent reductase. Facilitates the reduction of the catalytic iron-sulfur cluster found in the DPH1 subunit. The protein is 2-(3-amino-3-carboxypropyl)histidine synthase subunit 2 (DPH2) of Cricetulus griseus (Chinese hamster).